Reading from the N-terminus, the 354-residue chain is Uroporphyrinogen decarboxylase (354 aa).

Substrate is bound by residues arginine 27–arginine 31, aspartate 77, tyrosine 154, threonine 209, and histidine 327.

This sequence belongs to the uroporphyrinogen decarboxylase family. As to quaternary structure, homodimer.

It is found in the cytoplasm. The enzyme catalyses uroporphyrinogen III + 4 H(+) = coproporphyrinogen III + 4 CO2. The protein operates within porphyrin-containing compound metabolism; protoporphyrin-IX biosynthesis; coproporphyrinogen-III from 5-aminolevulinate: step 4/4. Functionally, catalyzes the decarboxylation of four acetate groups of uroporphyrinogen-III to yield coproporphyrinogen-III. This Pectobacterium atrosepticum (strain SCRI 1043 / ATCC BAA-672) (Erwinia carotovora subsp. atroseptica) protein is Uroporphyrinogen decarboxylase.